Here is an 882-residue protein sequence, read N- to C-terminus: Valine--tRNA ligase (882 aa).

Positions 48-58 match the 'HIGH' region motif; that stretch reads PNVTGKLHLGH. The 'KMSKS' region motif lies at 524 to 528; sequence KMSKS. An ATP-binding site is contributed by lysine 527. Residues 809–882 are a coiled coil; sequence LAELLDLDEE…KRLAELKAAR (74 aa). The interval 844 to 866 is disordered; it reads GFTDRAPEKVVQEERDKQADYEQ. The segment covering 845 to 863 has biased composition (basic and acidic residues); it reads FTDRAPEKVVQEERDKQAD.

This sequence belongs to the class-I aminoacyl-tRNA synthetase family. ValS type 1 subfamily. In terms of assembly, monomer.

The protein resides in the cytoplasm. It catalyses the reaction tRNA(Val) + L-valine + ATP = L-valyl-tRNA(Val) + AMP + diphosphate. Catalyzes the attachment of valine to tRNA(Val). As ValRS can inadvertently accommodate and process structurally similar amino acids such as threonine, to avoid such errors, it has a 'posttransfer' editing activity that hydrolyzes mischarged Thr-tRNA(Val) in a tRNA-dependent manner. The protein is Valine--tRNA ligase of Latilactobacillus sakei subsp. sakei (strain 23K) (Lactobacillus sakei subsp. sakei).